Here is a 381-residue protein sequence, read N- to C-terminus: Pentraxin-related protein PTX3 (381 aa).

Residues 1–17 (MHLPAILLCALWSAVVA) form the signal peptide. Cystine bridges form between Cys179-Cys357 and Cys210-Cys271. Positions 179 to 381 (CETAIFFPMR…QAHGGAQYVS (203 aa)) constitute a Pentraxin (PTX) domain. Asn220 carries N-linked (GlcNAc...) asparagine glycosylation.

In terms of assembly, homooctamer; disulfide-linked. Binds to C1q.

Its subcellular location is the secreted. Functionally, plays a role in the regulation of innate resistance to pathogens, inflammatory reactions, possibly clearance of self-components and female fertility. This is Pentraxin-related protein PTX3 (Ptx3) from Mus musculus (Mouse).